The sequence spans 127 residues: Large ribosomal subunit protein uL18 (127 aa).

This sequence belongs to the universal ribosomal protein uL18 family. In terms of assembly, part of the 50S ribosomal subunit; part of the 5S rRNA/L5/L18/L25 subcomplex. Contacts the 5S and 23S rRNAs.

This is one of the proteins that bind and probably mediate the attachment of the 5S RNA into the large ribosomal subunit, where it forms part of the central protuberance. In Streptomyces griseus subsp. griseus (strain JCM 4626 / CBS 651.72 / NBRC 13350 / KCC S-0626 / ISP 5235), this protein is Large ribosomal subunit protein uL18.